The chain runs to 74 residues: Omega-filistatoxin-Kh1a (74 aa).

Contains 6 disulfide bonds. As to expression, expressed by the venom gland.

It localises to the secreted. Potently blocks vertebrate calcium channels Cav1 and Cav2. Is the most active on Cav2.2/CACNA1B (from HEK) (IC(50)=2.3 nM), followed by Cav2.1/CACNA1A (IC(50)=4.3 nM), Cav2.2/CACNA1B (from oocyte) (IC(50)=14.4 nM), Cav1.2/CACNA1C (IC(50)=26.8 nM), and Cav2.3/CACNA1E (IC(50)=96.4 nM). In Kukulcania hibernalis (Southern house spider), this protein is Omega-filistatoxin-Kh1a.